Reading from the N-terminus, the 363-residue chain is NAD(P)H-quinone oxidoreductase subunit 1, chloroplastic (363 aa).

The next 6 helical transmembrane spans lie at 27-47 (IWLL…VLVI), 98-118 (FSIG…VIPF), 127-147 (LSIG…GLLM), 248-268 (YSGI…LVSS), 300-320 (VFGT…FLFI), and 336-356 (LLNL…LLTT).

This sequence belongs to the complex I subunit 1 family. In terms of assembly, NDH is composed of at least 16 different subunits, 5 of which are encoded in the nucleus.

The protein resides in the plastid. It is found in the chloroplast thylakoid membrane. The catalysed reaction is a plastoquinone + NADH + (n+1) H(+)(in) = a plastoquinol + NAD(+) + n H(+)(out). The enzyme catalyses a plastoquinone + NADPH + (n+1) H(+)(in) = a plastoquinol + NADP(+) + n H(+)(out). Its function is as follows. NDH shuttles electrons from NAD(P)H:plastoquinone, via FMN and iron-sulfur (Fe-S) centers, to quinones in the photosynthetic chain and possibly in a chloroplast respiratory chain. The immediate electron acceptor for the enzyme in this species is believed to be plastoquinone. Couples the redox reaction to proton translocation, and thus conserves the redox energy in a proton gradient. This is NAD(P)H-quinone oxidoreductase subunit 1, chloroplastic from Platanus occidentalis (Sycamore).